The primary structure comprises 241 residues: Anti-Pycsar protein Apyc1 (241 aa).

The tract at residues 17–215 (DNNNALLEQD…SVQKKTWLMH (199 aa)) is beta-lactamase-like. Zn(2+)-binding residues include His-59, His-61, Asp-63, His-64, His-142, Asp-162, and His-215.

The protein belongs to the nuclease anti-Pycsar protein Apyc1 family. In terms of assembly, homodimer. Zn(2+) serves as cofactor.

The enzyme catalyses 3',5'-cyclic CMP + H2O = CMP + H(+). The catalysed reaction is 3',5'-cyclic UMP + H2O = UMP + H(+). In terms of biological role, counteracts the endogenous Pycsar antiviral defense system. Phosphodiesterase that enables metal-dependent hydrolysis of host cyclic nucleotide Pycsar defense signals such as cCMP and cUMP. In Paenibacillus harenae, this protein is Anti-Pycsar protein Apyc1.